A 1558-amino-acid chain; its full sequence is Arginine-glutamic acid dipeptide repeats protein (1558 aa).

The span at 1–36 shows a compositional bias: basic and acidic residues; it reads MTADKDKDKDKEKDRDRDRDRERDKRDKARESENAR. The disordered stretch occupies residues 1 to 90; it reads MTADKDKDKD…KKKSRYERTD (90 aa). 2 positions are modified to phosphoserine: Ser-53 and Ser-56. The segment covering 74-85 has biased composition (basic residues); that stretch reads KSRKKPPKKKSR. Residues 103-283 form the BAH domain; the sequence is VVYRPGDCVY…PETRRLNSTQ (181 aa). Thr-120 is subject to Phosphothreonine. Residues Ser-142 and Ser-304 each carry the phosphoserine modification. The region spanning 284–387 is the ELM2 domain; sequence GEIRVGPSHQ…KALQRLVKKP (104 aa). One can recognise an SANT domain in the interval 391–443; sequence LIEKCWTEDEVKRFVKGLRQYGKNFFRIRKELLPSKETGELITFYYYWKKTPE. The tract at residues 464–495 is disordered; it reads TRTASTPVNTPSRPPSSEFLDLSSASEDDFDS. Positions 465-474 are enriched in polar residues; the sequence is RTASTPVNTP. Residues 479–488 show a composition bias toward low complexity; sequence SSEFLDLSSA. Residues 507–532 form a GATA-type zinc finger; sequence CRHCFTTTSKDWHHGGRENILLCTDC. Residues 542–1125 form a disordered region; it reads LPPIEKPVDP…PSHASQSARF (584 aa). A Glycyl lysine isopeptide (Lys-Gly) (interchain with G-Cter in SUMO2) cross-link involves residue Lys-560. At Thr-593 the chain carries Phosphothreonine. Phosphoserine occurs at positions 594, 600, and 613. Low complexity predominate over residues 609 to 623; it reads SGRNSPSAASTSSND. Residues 624–640 show a composition bias toward basic and acidic residues; the sequence is SKAETVKKSAKKVKEEA. Residue Lys-637 forms a Glycyl lysine isopeptide (Lys-Gly) (interchain with G-Cter in SUMO2) linkage. Phosphoserine occurs at positions 642, 656, 675, and 679. Basic and acidic residues predominate over residues 652 to 673; the sequence is EKVASDTEDTDRITSKKTKTQE. Over residues 688 to 708 the composition is skewed to basic and acidic residues; it reads SDSRSVNDEGSSDPKDIDQDN. Polar residues predominate over residues 709–720; it reads RSTSPSIPSPQD. Over residues 726 to 752 the composition is skewed to low complexity; that stretch reads DSSAQQQMLQAQPPALQAPSGAASAPS. Positions 778 to 792 are enriched in polar residues; it reads SPATSQPPNQTQSTV. Residues 806-823 are compositionally biased toward pro residues; that stretch reads LHPPRLPSPHPPLQPMTA. 3 stretches are compositionally biased toward low complexity: residues 824 to 857, 865 to 874, and 891 to 901; these read PPSQSSAQPHPQPSLHSQGPPGPHSLQTGPLLQH, GLPSQPSQGQ, and QLPASQSALQP. Positions 902–932 are enriched in pro residues; it reads QQPPREQPLPPAPLAMPHIKPPPTTPIPQLP. A compositionally biased stretch (low complexity) spans 962–972; that stretch reads KPLSSLSTHHP. Positions 1012–1023 are enriched in polar residues; sequence HPTTGLHQVPSQ. Pro residues predominate over residues 1027–1053; the sequence is PQHPFVPGGPPPITPPSCPPTSTPPAG. Residues 1054–1077 show a composition bias toward low complexity; sequence PSSSSQPPCSAAVSSGGSVPGAPS. Phosphoserine occurs at positions 1098, 1105, and 1107. The span at 1098-1109 shows a compositional bias: pro residues; that stretch reads SPPPPPRSPSPE. The residue at position 1111 (Thr-1111) is a Phosphothreonine. A coiled-coil region spans residues 1148–1203; the sequence is GSKLAKKREEAIEKAKREAEQKAREEREREKEKEKEREREREREREAERAAKASSS. Lys-1150 is modified (N6-acetyllysine). A compositionally biased stretch (basic and acidic residues) spans 1154–1198; that stretch reads KREEAIEKAKREAEQKAREEREREKEKEKEREREREREREAERAA. Residues 1154 to 1238 are disordered; that stretch reads KREEAIEKAK…TTIAAVPPYI (85 aa). Position 1251 is a phosphotyrosine (Tyr-1251). Position 1258 is a phosphoserine (Ser-1258).

As to quaternary structure, interacts with HDAC1 and ATN1. Interaction with ATN1 is improved when the poly-Gln region of ATN1 is extended. Interacts with FAT1.

The protein localises to the nucleus. Its subcellular location is the PML body. In terms of biological role, plays a role as a transcriptional repressor during development. May play a role in the control of cell survival. The polypeptide is Arginine-glutamic acid dipeptide repeats protein (Rere) (Mus musculus (Mouse)).